The sequence spans 579 residues: Type II restriction enzyme FokI (579 aa).

Catalysis depends on residues Asp-450, Asp-467, and Lys-469.

Monomer, in which form it can cleave DNA. Homodimer when bound to DNA. It depends on Mg(2+) as a cofactor.

It catalyses the reaction Endonucleolytic cleavage of DNA to give specific double-stranded fragments with terminal 5'-phosphates.. Functionally, an S subtype restriction enzyme that recognizes the asymmetric double-stranded sequence 5'-GGATG-3' and cleaves respectively 14 bases after G-1 (top strand) and 13 bases before C-1 (bottom strand). This is Type II restriction enzyme FokI from Planomicrobium okeanokoites (Planococcus okeanokoites).